A 234-amino-acid polypeptide reads, in one-letter code: Leucyl/phenylalanyl-tRNA--protein transferase (234 aa).

Belongs to the L/F-transferase family.

It is found in the cytoplasm. It carries out the reaction N-terminal L-lysyl-[protein] + L-leucyl-tRNA(Leu) = N-terminal L-leucyl-L-lysyl-[protein] + tRNA(Leu) + H(+). The catalysed reaction is N-terminal L-arginyl-[protein] + L-leucyl-tRNA(Leu) = N-terminal L-leucyl-L-arginyl-[protein] + tRNA(Leu) + H(+). It catalyses the reaction L-phenylalanyl-tRNA(Phe) + an N-terminal L-alpha-aminoacyl-[protein] = an N-terminal L-phenylalanyl-L-alpha-aminoacyl-[protein] + tRNA(Phe). Functions in the N-end rule pathway of protein degradation where it conjugates Leu, Phe and, less efficiently, Met from aminoacyl-tRNAs to the N-termini of proteins containing an N-terminal arginine or lysine. This chain is Leucyl/phenylalanyl-tRNA--protein transferase, found in Enterobacter sp. (strain 638).